The sequence spans 534 residues: MAFVLMNNTNAFLVTLLLLSLSYIPLSFSTIQQDFVMCLVDNSDASFPMDSSFFTHDLNASSFKLALETSAQNLRYLMPSNPKPEFIFEPLYETHVQAAVLCAKKLKLHLRLRSGGHDYEGLSYVSEMETAFVIVDLSKLRQISVDIESNSAWVHAGASIGEVYYRIQEKSKIHGFPAGLCTSLGIGGHIIGGAYGSMMRKFGLGADNVLDARIVDADGKILNRAAMGEDVFWAIRGGGGGSFGVILAWKIKLVPVPEIVTVFTVTRTLEQDGTKLLYKWQQVADKLDEDLFIRVIIQPTSKTPKSKERTISTSYQGQFLGDANRLLQVMQRSFPQLGLTKKDCLETSWIKSVMYIAGFPSTAPSEALLDGKSLFKNYFKAKSDYVEEPIPVEGLEGLWEKLLEEDSPLTIWNPYGGMMAKIPETETPFPHRSGTLFKIQWLTLWQDGKTSEAKHMGWMREMYSYMEQYVSKSPRSAYVNYRDLDLGMNGKGSDAREWGNRYFKGNFERLVEIKAKFDPENFFRHEQSIPTELE.

The first 29 residues, 1-29, serve as a signal peptide directing secretion; it reads MAFVLMNNTNAFLVTLLLLSLSYIPLSFS. Asn7 and Asn59 each carry an N-linked (GlcNAc...) asparagine glycan. Cys38 and Cys102 are oxidised to a cystine. Residues 117–181 constitute a cross-link (6-(S-cysteinyl)-8alpha-(pros-histidyl)-FAD (His-Cys)); it reads HDYEGLSYVS…KIHGFPAGLC (65 aa).

It belongs to the oxygen-dependent FAD-linked oxidoreductase family. FAD serves as cofactor. Post-translationally, the FAD cofactor is bound via a bicovalent 6-S-cysteinyl, 8alpha-N1-histidyl FAD linkage.

It localises to the secreted. The protein localises to the cell wall. The enzyme catalyses (E)-4-coumaroyl alcohol + A = (E)-4-coumaraldehyde + AH2. It carries out the reaction (E)-coniferol + A = (E)-coniferaldehyde + AH2. It catalyses the reaction (E)-sinapyl alcohol + A = (E)-sinapaldehyde + AH2. The protein operates within phenylpropanoid metabolism. Its function is as follows. Mediates oxidation of p-hydroxylated derivatives of cinnamyl alcohol (i.e. the monolignols p-coumaryl-, coniferyl-, and sinapyl alcohol) to their corresponding aldehydes. The electron acceptor required for these reactions is not known, but does not seem to be dioxygen. Is much less efficient towards cinnamyl alcohol. This chain is Monolignol oxidoreductase AtBBE-like 13, found in Arabidopsis thaliana (Mouse-ear cress).